Here is a 129-residue protein sequence, read N- to C-terminus: Lysozyme C (129 aa).

A C-type lysozyme domain is found at 1–129 (KVFGRCELAA…VHAWIRGCRL (129 aa)). 4 cysteine pairs are disulfide-bonded: Cys-6-Cys-127, Cys-30-Cys-115, Cys-64-Cys-80, and Cys-76-Cys-94. Residues Glu-35 and Asp-52 contribute to the active site.

This sequence belongs to the glycosyl hydrolase 22 family. Monomer.

It localises to the secreted. It catalyses the reaction Hydrolysis of (1-&gt;4)-beta-linkages between N-acetylmuramic acid and N-acetyl-D-glucosamine residues in a peptidoglycan and between N-acetyl-D-glucosamine residues in chitodextrins.. Its function is as follows. Lysozymes have primarily a bacteriolytic function; those in tissues and body fluids are associated with the monocyte-macrophage system and enhance the activity of immunoagents. In Callipepla californica (California quail), this protein is Lysozyme C (LYZ).